A 162-amino-acid polypeptide reads, in one-letter code: Cyclic pyranopterin monophosphate synthase (162 aa).

Residues 75–77 (LCH) and 113–114 (ME) contribute to the substrate site. Asp128 is an active-site residue.

This sequence belongs to the MoaC family. As to quaternary structure, homohexamer; trimer of dimers.

It carries out the reaction (8S)-3',8-cyclo-7,8-dihydroguanosine 5'-triphosphate = cyclic pyranopterin phosphate + diphosphate. The protein operates within cofactor biosynthesis; molybdopterin biosynthesis. Catalyzes the conversion of (8S)-3',8-cyclo-7,8-dihydroguanosine 5'-triphosphate to cyclic pyranopterin monophosphate (cPMP). This chain is Cyclic pyranopterin monophosphate synthase, found in Klebsiella pneumoniae (strain 342).